Here is a 329-residue protein sequence, read N- to C-terminus: Short-chain dehydrogenase/reductase prx4 (329 aa).

Residues S58, I60, and N81 each coordinate NADP(+). An N-linked (GlcNAc...) asparagine glycan is attached at N91. Residues D98, N121, K161, Y194, K198, and T229 each coordinate NADP(+). The active-site Proton acceptor is the Y194. K198 (lowers pKa of active site Tyr) is an active-site residue. A helical membrane pass occupies residues 238–258 (GPLMAAGLPVSSAHMVGLAVV).

Belongs to the short-chain dehydrogenases/reductases (SDR) family.

It localises to the membrane. Its pathway is sesquiterpene biosynthesis. In terms of biological role, short-chain dehydrogenase/reductase; part of the gene cluster that mediates the biosynthesis of PR-toxin, a bicyclic sesquiterpene belonging to the eremophilane class and acting as a mycotoxin. The first step of the pathway is catalyzed by the aristolochene synthase which performs the cyclization of trans,trans-farnesyl diphosphate (FPP) to the bicyclic sesquiterpene aristolochene. Following the formation of aristolochene, the non-oxygenated aristolochene is converted to the trioxygenated intermediate eremofortin B, via 7-epi-neopetasone. This conversion appears to involve three enzymes, a hydroxysterol oxidase-like enzyme, the quinone-oxidase prx3 that forms the quinone-type-structure in the bicyclic nucleus of aristolochene with the C8-oxo group and the C-3 hydroxyl group, and the P450 monooxygenase ORF6 that introduces the epoxide at the double bond between carbons 1 and 2. No monoxy or dioxy-intermediates have been reported to be released to the broth, so these three early oxidative reactions may be coupled together. Eremofortin B is further oxidized by another P450 monooxygenase, that introduces a second epoxide between carbons 7 and 11 prior to acetylation to eremofortin A by the acetyltransferase ORF8. The second epoxidation may be performed by a second P450 monooxygenase. After the acetylation step, eremofortin A is converted to eremofortin C and then to PR-toxin. First the conversion of eremofortin A to eremofortin C proceeds by oxidation of the side chain of the molecule at C-12 and is catalyzed by the short-chain oxidoreductase prx1. The cytochrome P450 monooxygenase ORF6 is probably also involved in this step. The primary alcohol formed at C-12 is finally oxidized by the short-chain alcohol dehydrogenase prx4 that forms PR-toxin. This is Short-chain dehydrogenase/reductase prx4 from Penicillium roqueforti.